The following is a 319-amino-acid chain: RNA polymerase II holoenzyme cyclin-like subunit (319 aa).

Residues 53–142 (QQLIRLAKRL…LGECEFFMIS (90 aa)) form the Cyclin N-terminal domain. Over residues 237–251 (QGQQAQGGMPEPAAA) the composition is skewed to low complexity. Positions 237–261 (QGQQAQGGMPEPAAAEPKEKRQQDR) are disordered. Residues 252 to 261 (EPKEKRQQDR) show a composition bias toward basic and acidic residues.

This sequence belongs to the cyclin family. Cyclin C subfamily. In terms of assembly, component of the SRB8-11 complex, a regulatory module of the Mediator complex. Interacts with SSN3/FCK1.

Its subcellular location is the nucleus. Functionally, component of the SRB8-11 complex. The SRB8-11 complex is a regulatory module of the Mediator complex which is itself involved in regulation of basal and activated RNA polymerase II-dependent transcription. The SRB8-11 complex may be involved in the transcriptional repression of a subset of genes regulated by Mediator. It may inhibit the association of the Mediator complex with RNA polymerase II to form the holoenzyme complex. The SRB8-11 complex phosphorylates the C-terminal domain (CTD) of the largest subunit of RNA polymerase II. May play a role in signal transduction pathways regulating secondary metabolism and fungal development (conidiation). In Gibberella moniliformis (Maize ear and stalk rot fungus), this protein is RNA polymerase II holoenzyme cyclin-like subunit (SSN8).